A 661-amino-acid polypeptide reads, in one-letter code: PAN2-PAN3 deadenylation complex subunit PAN3 (661 aa).

2 disordered regions span residues 1 to 26 and 53 to 130; these read MASAGKPALDDSRRGTGSPKIKAREN and DPHK…LRQD. The C3H1-type zinc finger occupies 26-55; it reads NAKDTLCRNITIYGRCRYEDKGCAFNHDPH. The segment covering 75 to 102 has biased composition (low complexity); the sequence is SFTPSLLSSNGSSPTSTPATTKKMTTIS. Polar residues predominate over residues 115 to 130; that stretch reads SVVSRSNASTPGLRQD. Residues 263 to 524 form a pseudokinase domain region; that stretch reads QTLPNTQLPA…NIDIFITGIS (262 aa). Residues Arg-315, 364-371, and 424-425 contribute to the ATP site; these read DYHPLSKT and SK. Residues 525-563 adopt a coiled-coil conformation; that stretch reads SQLMSTFDSALHLDDQLTSDLSRELENGRLVRLMTKLNF. The interval 564-661 is knob domain; sequence VNERPEYEHD…ALMKPARRMH (98 aa).

The protein belongs to the protein kinase superfamily. PAN3 family. Homodimer. Forms a heterotrimer with a catalytic subunit pan2 to form the poly(A)-nuclease (PAN) deadenylation complex. Interacts (via PAM-2 motif) with poly(A)-binding protein pab1 (via PABC domain), conferring substrate specificity of the enzyme complex.

It localises to the cytoplasm. In terms of biological role, regulatory subunit of the poly(A)-nuclease (PAN) deadenylation complex, one of two cytoplasmic mRNA deadenylases involved in mRNA turnover. PAN specifically shortens poly(A) tails of RNA and the activity is stimulated by poly(A)-binding protein pab1. PAN deadenylation is followed by rapid degradation of the shortened mRNA tails by the CCR4-NOT complex. Deadenylated mRNAs are then degraded by two alternative mechanisms, namely exosome-mediated 3'-5' exonucleolytic degradation, or deadenylation-dependent mRNA decaping and subsequent 5'-3' exonucleolytic degradation by xrn1. May also be involved in post-transcriptional maturation of mRNA poly(A) tails. pan3 acts as a positive regulator for PAN activity, recruiting the catalytic subunit pan2 to mRNA via its interaction with RNA and with pab1. In Neosartorya fischeri (strain ATCC 1020 / DSM 3700 / CBS 544.65 / FGSC A1164 / JCM 1740 / NRRL 181 / WB 181) (Aspergillus fischerianus), this protein is PAN2-PAN3 deadenylation complex subunit PAN3.